The sequence spans 1403 residues: Sushi, nidogen and EGF-like domain-containing protein 1 (1403 aa).

Positions 1–24 (MRRGAAWALLLAAALGLGARGVRA) are cleaved as a signal peptide. The NIDO domain maps to 103-258 (AFWADVDNRR…GRWAFRIDDA (156 aa)). EGF-like domains lie at 268–309 (TTSV…RRCH), 311–347 (DVNECASHPCQNGGTCTHGVNSFSCQCPAGFQGPTCE), and 349–385 (AQSPCDNKVCQNGGQCQAESSSAVCVCQAGYTGATCE). Disulfide bonds link cysteine 272/cysteine 284, cysteine 278/cysteine 297, cysteine 299/cysteine 308, cysteine 315/cysteine 326, cysteine 320/cysteine 335, cysteine 337/cysteine 346, cysteine 353/cysteine 364, cysteine 358/cysteine 373, cysteine 375/cysteine 384, cysteine 391/cysteine 402, cysteine 396/cysteine 411, cysteine 413/cysteine 422, cysteine 433/cysteine 444, cysteine 438/cysteine 453, cysteine 455/cysteine 464, cysteine 472/cysteine 480, cysteine 474/cysteine 488, and cysteine 490/cysteine 499. Residue asparagine 292 is glycosylated (N-linked (GlcNAc...) asparagine). The EGF-like 4; calcium-binding domain maps to 387 to 423 (DVDECSSDPCLNGGSCVDLVGNYSCICVEPFEGPQCE). The N-linked (GlcNAc...) asparagine glycan is linked to asparagine 408. EGF-like domains lie at 429-465 (VPSPCLSNPCLNGGTCVDADQGYVCECPEGFMGLDCR) and 468-500 (ILNDCDCRNGGRCLGANTTICQCPPGFFGLLCE). Asparagine 484 is a glycosylation site (N-linked (GlcNAc...) asparagine). Asparagine 536 carries an N-linked (GlcNAc...) asparagine glycan. 4 consecutive EGF-like domains span residues 541-577 (LPSPCDSDPCFNGGSCDAHEDSYTCECPRGFHGRHCE), 580-616 (RPHLCSSGPCRNGGTCKETGDEYRCTCPYRFTGRHCE), 619-655 (KPDSCASGPCHNGGTCFHYIGKYKCDCPPGFSGRHCE), and 657-693 (APSPCFRSPCMNGGICEDLGTDFSCHCQPGYTGHRCQ). Intrachain disulfides connect cysteine 545/cysteine 556, cysteine 550/cysteine 565, cysteine 567/cysteine 576, cysteine 584/cysteine 595, cysteine 589/cysteine 604, cysteine 606/cysteine 615, cysteine 623/cysteine 634, cysteine 628/cysteine 643, cysteine 645/cysteine 654, cysteine 661/cysteine 672, cysteine 666/cysteine 681, cysteine 683/cysteine 692, cysteine 698/cysteine 739, cysteine 724/cysteine 751, cysteine 757/cysteine 768, cysteine 762/cysteine 777, cysteine 779/cysteine 788, cysteine 795/cysteine 806, cysteine 800/cysteine 815, cysteine 817/cysteine 826, cysteine 833/cysteine 844, cysteine 838/cysteine 853, cysteine 855/cysteine 864, cysteine 871/cysteine 882, cysteine 876/cysteine 891, and cysteine 893/cysteine 902. The region spanning 696–753 (VDCGQPEEVKHATMRLNGTRMGSVALYTCDPGFSLSVLSHMRVCQPQGVWSQPPQCIE) is the Sushi domain. N-linked (GlcNAc...) asparagine glycosylation is present at asparagine 712. An EGF-like 11; calcium-binding domain is found at 753-789 (EVDECQSQPCLHKGSCQDLIAGYQCLCSPGYEGVHCE). The 37-residue stretch at 791 to 827 (ETDECQAQPCRNGGSCRDLPGAFICQCPEGFVGTHCE) folds into the EGF-like 12; calcium-binding domain. EGF-like domains lie at 829 to 865 (EVDACASSPCQHGGRCEDGGGAYLCVCPEGFFGYNCE) and 867 to 903 (VSDPCFSSPCGGRGYCLASNGSHSCTCKVGYTGKDCT). A glycan (N-linked (GlcNAc...) asparagine) is linked at asparagine 886. Fibronectin type-III domains are found at residues 908 to 1006 (PPTA…TRPR), 1007 to 1105 (PIED…TRPL), and 1106 to 1200 (PPAN…SPRD). Residues asparagine 977, asparagine 1015, asparagine 1109, asparagine 1139, and asparagine 1298 are each glycosylated (N-linked (GlcNAc...) asparagine). The tract at residues 1295–1314 (LPKNNSKDTESTPGSCSEDT) is disordered. Positions 1305 to 1314 (STPGSCSEDT) are enriched in polar residues. Residues 1306 to 1342 (TPGSCSEDTCQNGGTCVPGANAHSCDCRPGFKGRHCE) form the EGF-like 15 domain. Disulfide bonds link cysteine 1310/cysteine 1321, cysteine 1315/cysteine 1330, and cysteine 1332/cysteine 1341.

Phosphorylated on serine and threonine residues. Post-translationally, N-glycosylated. Expressed in liver.

It localises to the secreted. It is found in the extracellular space. Its subcellular location is the extracellular matrix. The chain is Sushi, nidogen and EGF-like domain-containing protein 1 from Rattus norvegicus (Rat).